A 662-amino-acid chain; its full sequence is Pollen receptor-like kinase 1 (662 aa).

The N-terminal stretch at 1-31 (MPPMQARTLSVYNVMVPLVCLLLFFSTPTHG) is a signal peptide. Residues 32–256 (LSDSEAILKF…ARPKSSSRGP (225 aa)) are Extracellular-facing. LRR repeat units lie at residues 79 to 98 (QMEN…SGLT), 99 to 121 (SLRT…KKLA), 122 to 144 (ALKS…AFEG), 147 to 169 (WLKK…VAKL), 171 to 191 (KLLE…EFEH), and 192 to 214 (QLHL…LSMT). An N-linked (GlcNAc...) asparagine glycan is attached at Asn197. The disordered stretch occupies residues 233-253 (ECDSPYIEHPPQSEARPKSSS). A helical membrane pass occupies residues 257–277 (LVITAIVAALTILIILGVIFL). Topologically, residues 278–662 (LNRSYKNKKP…GESCESISFA (385 aa)) are cytoplasmic. A disordered region spans residues 288-330 (RLAVETGPSSLQKKTGIREADQSRRDRKKADHRKGSGTTKRMG). In terms of domain architecture, Protein kinase spans 357-639 (KASAEILGSG…EREGDDDDFY (283 aa)). The residue at position 359 (Ser359) is a Phosphoserine. Residues 363-371 (LGSGCFGAS) and Lys385 contribute to the ATP site. Position 437 is a phosphoserine (Ser437). Phosphothreonine is present on Thr457. Tyr527 is subject to Phosphotyrosine. The interval 636–662 (DDFYSTYVSETDGRSSKGESCESISFA) is disordered. The segment covering 646 to 655 (TDGRSSKGES) has biased composition (basic and acidic residues).

This sequence belongs to the protein kinase superfamily. Ser/Thr protein kinase family. In terms of assembly, interacts in vitro with ROPGEF1 (via PRONE domain). Expressed in pollen and/or in flowers, but not in leaves.

Its subcellular location is the cell membrane. It catalyses the reaction L-seryl-[protein] + ATP = O-phospho-L-seryl-[protein] + ADP + H(+). The catalysed reaction is L-threonyl-[protein] + ATP = O-phospho-L-threonyl-[protein] + ADP + H(+). Receptor-like kinase involved in the control of pollen germination and pollen tube polar growth. This is Pollen receptor-like kinase 1 from Arabidopsis thaliana (Mouse-ear cress).